The sequence spans 281 residues: Probable endonuclease 4 (281 aa).

9 residues coordinate Zn(2+): H69, H109, E145, D179, H182, H216, D229, H231, and E261.

It belongs to the AP endonuclease 2 family. Zn(2+) serves as cofactor.

The enzyme catalyses Endonucleolytic cleavage to 5'-phosphooligonucleotide end-products.. Functionally, endonuclease IV plays a role in DNA repair. It cleaves phosphodiester bonds at apurinic or apyrimidinic (AP) sites, generating a 3'-hydroxyl group and a 5'-terminal sugar phosphate. In Buchnera aphidicola subsp. Acyrthosiphon pisum (strain APS) (Acyrthosiphon pisum symbiotic bacterium), this protein is Probable endonuclease 4.